Here is a 68-residue protein sequence, read N- to C-terminus: Large ribosomal subunit protein uL30 (68 aa).

It belongs to the universal ribosomal protein uL30 family. In terms of assembly, part of the 50S ribosomal subunit.

The sequence is that of Large ribosomal subunit protein uL30 from Bartonella tribocorum (strain CIP 105476 / IBS 506).